Reading from the N-terminus, the 192-residue chain is Phosphoheptose isomerase (192 aa).

The 158-residue stretch at 35–192 (LIETLENQGK…CIERHFAHKN (158 aa)) folds into the SIS domain. Residue 50–52 (NGG) participates in substrate binding. Zn(2+) contacts are provided by histidine 59 and glutamate 63. Substrate contacts are provided by residues glutamate 63, 92–93 (ND), 118–120 (STS), serine 123, and glutamine 170. Glutamine 170 and histidine 178 together coordinate Zn(2+).

This sequence belongs to the SIS family. GmhA subfamily. As to quaternary structure, homotetramer. Requires Zn(2+) as cofactor.

The protein localises to the cytoplasm. The enzyme catalyses 2 D-sedoheptulose 7-phosphate = D-glycero-alpha-D-manno-heptose 7-phosphate + D-glycero-beta-D-manno-heptose 7-phosphate. Its pathway is carbohydrate biosynthesis; D-glycero-D-manno-heptose 7-phosphate biosynthesis; D-glycero-alpha-D-manno-heptose 7-phosphate and D-glycero-beta-D-manno-heptose 7-phosphate from sedoheptulose 7-phosphate: step 1/1. Its function is as follows. Catalyzes the isomerization of sedoheptulose 7-phosphate in D-glycero-D-manno-heptose 7-phosphate. The protein is Phosphoheptose isomerase of Helicobacter pylori (strain HPAG1).